The sequence spans 503 residues: UDP-N-acetylmuramate--L-alanine ligase (503 aa).

Positions 1 to 22 are disordered; that stretch reads MIKQTHVSNSSNNSTNSTAAQV. The segment covering 8-18 has biased composition (low complexity); it reads SNSSNNSTNST. Residue 135 to 141 coordinates ATP; it reads GTHGKTT.

It belongs to the MurCDEF family.

It localises to the cytoplasm. It carries out the reaction UDP-N-acetyl-alpha-D-muramate + L-alanine + ATP = UDP-N-acetyl-alpha-D-muramoyl-L-alanine + ADP + phosphate + H(+). It functions in the pathway cell wall biogenesis; peptidoglycan biosynthesis. Functionally, cell wall formation. In Colwellia psychrerythraea (strain 34H / ATCC BAA-681) (Vibrio psychroerythus), this protein is UDP-N-acetylmuramate--L-alanine ligase.